The primary structure comprises 209 residues: Dual specificity phosphatase 29 (209 aa).

Residues 45–193 (HVNEVWPNLY…LRELDIKLAL (149 aa)) form the Tyrosine-protein phosphatase domain. 137 to 144 (NCAMGRSR) serves as a coordination point for substrate. Cys-138 (phosphocysteine intermediate) is an active-site residue.

The protein belongs to the protein-tyrosine phosphatase family. Non-receptor class dual specificity subfamily.

It is found in the cytoplasm. It localises to the nucleus. The catalysed reaction is O-phospho-L-tyrosyl-[protein] + H2O = L-tyrosyl-[protein] + phosphate. It catalyses the reaction O-phospho-L-seryl-[protein] + H2O = L-seryl-[protein] + phosphate. It carries out the reaction O-phospho-L-threonyl-[protein] + H2O = L-threonyl-[protein] + phosphate. Its function is as follows. Dual specificity phosphatase able to dephosphorylate phosphotyrosine, phosphoserine and phosphothreonine residues, with a preference for phosphotyrosine as a substrate. Dual specificity phosphatase able to dephosphorylate phosphotyrosine, phosphoserine and phosphothreonine residues within the same substrate, with a preference for phosphotyrosine as a substrate. Involved in the modulation of AMPK and MAPK1/2 signaling pathway. The chain is Dual specificity phosphatase 29 (dusp29) from Xenopus laevis (African clawed frog).